A 760-amino-acid polypeptide reads, in one-letter code: Xaa-Pro dipeptidyl-peptidase (760 aa).

Catalysis depends on charge relay system residues Ser-349, Asp-469, and His-499.

The protein belongs to the peptidase S15 family. In terms of assembly, homodimer.

It localises to the cytoplasm. It carries out the reaction Hydrolyzes Xaa-Pro-|- bonds to release unblocked, N-terminal dipeptides from substrates including Ala-Pro-|-p-nitroanilide and (sequentially) Tyr-Pro-|-Phe-Pro-|-Gly-Pro-|-Ile.. Functionally, removes N-terminal dipeptides sequentially from polypeptides having unsubstituted N-termini provided that the penultimate residue is proline. This Streptococcus pyogenes serotype M6 (strain ATCC BAA-946 / MGAS10394) protein is Xaa-Pro dipeptidyl-peptidase.